The chain runs to 391 residues: Probable acridone synthase 4 (391 aa).

The active site involves C164.

It belongs to the thiolase-like superfamily. Chalcone/stilbene synthases family.

The catalysed reaction is N-methylanthraniloyl-CoA + 3 malonyl-CoA + 3 H(+) = 1,3-dihydroxy-N-methylacridone + 3 CO2 + 4 CoA + H2O. This chain is Probable acridone synthase 4 (ACS4), found in Ruta graveolens (Common rue).